Here is a 280-residue protein sequence, read N- to C-terminus: Phosphonates import ATP-binding protein PhnC (280 aa).

The 236-residue stretch at 4–239 (ITVTNLHKSY…VIDDIYGNIQ (236 aa)) folds into the ABC transporter domain. 36-43 (GESGAGKS) is a binding site for ATP. Residues 246-280 (GDDANADVAPTTSSDGGTDAAGGPDQQPASDPHLS) form a disordered region.

Belongs to the ABC transporter superfamily. Phosphonates importer (TC 3.A.1.9.1) family. The complex is composed of two ATP-binding proteins (PhnC), two transmembrane proteins (PhnE) and a solute-binding protein (PhnD).

Its subcellular location is the cell membrane. It carries out the reaction phosphonate(out) + ATP + H2O = phosphonate(in) + ADP + phosphate + H(+). Functionally, part of the ABC transporter complex PhnCDE involved in phosphonates import. Responsible for energy coupling to the transport system. This is Phosphonates import ATP-binding protein PhnC from Halobacterium salinarum (strain ATCC 700922 / JCM 11081 / NRC-1) (Halobacterium halobium).